The following is a 356-amino-acid chain: Protein-glutamate methylesterase/protein-glutamine glutaminase 2 (356 aa).

Residues 6–123 (KVLIVDDSAL…KQFLEESSIR (118 aa)) form the Response regulatory domain. Asp-57 carries the post-translational modification 4-aspartylphosphate. The region spanning 165–356 (VQRTEKVVVV…AAAIVKACNS (192 aa)) is the CheB-type methylesterase domain. Residues Ser-177, His-203, and Asp-299 contribute to the active site.

The protein belongs to the CheB family. Phosphorylated by CheA. Phosphorylation of the N-terminal regulatory domain activates the methylesterase activity.

It localises to the cytoplasm. It carries out the reaction [protein]-L-glutamate 5-O-methyl ester + H2O = L-glutamyl-[protein] + methanol + H(+). It catalyses the reaction L-glutaminyl-[protein] + H2O = L-glutamyl-[protein] + NH4(+). Involved in chemotaxis. Part of a chemotaxis signal transduction system that modulates chemotaxis in response to various stimuli. Catalyzes the demethylation of specific methylglutamate residues introduced into the chemoreceptors (methyl-accepting chemotaxis proteins or MCP) by CheR. Also mediates the irreversible deamidation of specific glutamine residues to glutamic acid. The polypeptide is Protein-glutamate methylesterase/protein-glutamine glutaminase 2 (Oleidesulfovibrio alaskensis (strain ATCC BAA-1058 / DSM 17464 / G20) (Desulfovibrio alaskensis)).